A 117-amino-acid polypeptide reads, in one-letter code: Probable non-functional immunoglobulin heavy variable 7-81 (117 aa).

Residues 1–19 form the signal peptide; it reads MDWTWSILFLVAAATGTYS. A framework-1 region spans residues 20–44; it reads QVQLVQSGHEVKQPGASVKVSCKAS. An Ig-like domain is found at 20-117; the sequence is QVQLVQSGHE…EDMAMYYCAR (98 aa). An intrachain disulfide couples cysteine 41 to cysteine 115. Positions 45 to 52 are complementarity-determining-1; sequence GYSFTTYG. The tract at residues 53-69 is framework-2; it reads MNWVPQAPGQGLEWMGW. The interval 70 to 77 is complementarity-determining-2; the sequence is FNTYTGNP. A glycan (N-linked (GlcNAc...) asparagine) is linked at asparagine 76. The tract at residues 78 to 115 is framework-3; it reads TYAQGFTGRFVFSMDTSASTAYLQISSLKAEDMAMYYC. Positions 116–117 are complementarity-determining-3; it reads AR.

Immunoglobulins are composed of two identical heavy chains and two identical light chains; disulfide-linked.

Its subcellular location is the secreted. It is found in the cell membrane. Its function is as follows. Probable non-functional open reading frame (ORF) of V region of the variable domain of immunoglobulin heavy chains. Non-functional ORF generally cannot participate in the synthesis of a productive immunoglobulin chain due to altered V-(D)-J or switch recombination and/or splicing site (at mRNA level) and/or conserved amino acid change (protein level). Immunoglobulins, also known as antibodies, are membrane-bound or secreted glycoproteins produced by B lymphocytes. In the recognition phase of humoral immunity, the membrane-bound immunoglobulins serve as receptors which, upon binding of a specific antigen, trigger the clonal expansion and differentiation of B lymphocytes into immunoglobulins-secreting plasma cells. Secreted immunoglobulins mediate the effector phase of humoral immunity, which results in the elimination of bound antigens. The antigen binding site is formed by the variable domain of one heavy chain, together with that of its associated light chain. Thus, each immunoglobulin has two antigen binding sites with remarkable affinity for a particular antigen. The variable domains are assembled by a process called V-(D)-J rearrangement and can then be subjected to somatic hypermutations which, after exposure to antigen and selection, allow affinity maturation for a particular antigen. This is Probable non-functional immunoglobulin heavy variable 7-81 from Homo sapiens (Human).